The sequence spans 229 residues: Enolase-phosphatase E1 (229 aa).

It belongs to the HAD-like hydrolase superfamily. MasA/MtnC family. As to quaternary structure, monomer. Mg(2+) is required as a cofactor.

It catalyses the reaction 5-methylsulfanyl-2,3-dioxopentyl phosphate + H2O = 1,2-dihydroxy-5-(methylsulfanyl)pent-1-en-3-one + phosphate. Its pathway is amino-acid biosynthesis; L-methionine biosynthesis via salvage pathway; L-methionine from S-methyl-5-thio-alpha-D-ribose 1-phosphate: step 3/6. It participates in amino-acid biosynthesis; L-methionine biosynthesis via salvage pathway; L-methionine from S-methyl-5-thio-alpha-D-ribose 1-phosphate: step 4/6. In terms of biological role, bifunctional enzyme that catalyzes the enolization of 2,3-diketo-5-methylthiopentyl-1-phosphate (DK-MTP-1-P) into the intermediate 2-hydroxy-3-keto-5-methylthiopentenyl-1-phosphate (HK-MTPenyl-1-P), which is then dephosphorylated to form the acireductone 1,2-dihydroxy-3-keto-5-methylthiopentene (DHK-MTPene). The chain is Enolase-phosphatase E1 from Yersinia pseudotuberculosis serotype O:1b (strain IP 31758).